Here is a 279-residue protein sequence, read N- to C-terminus: Large ribosomal subunit protein uL2 (279 aa).

A disordered region spans residues 227–279 (GVAMNPVDHPMGGGEGKTSGGRHPVSPWGFPTKGKKTRDPNKLSSKFIKSKKR).

It belongs to the universal ribosomal protein uL2 family. In terms of assembly, part of the 50S ribosomal subunit. Forms a bridge to the 30S subunit in the 70S ribosome.

In terms of biological role, one of the primary rRNA binding proteins. Required for association of the 30S and 50S subunits to form the 70S ribosome, for tRNA binding and peptide bond formation. It has been suggested to have peptidyltransferase activity; this is somewhat controversial. Makes several contacts with the 16S rRNA in the 70S ribosome. The sequence is that of Large ribosomal subunit protein uL2 from Neorickettsia sennetsu (strain ATCC VR-367 / Miyayama) (Ehrlichia sennetsu).